We begin with the raw amino-acid sequence, 213 residues long: Phosphatidylserine decarboxylase proenzyme (213 aa).

Ser-183 (schiff-base intermediate with substrate; via pyruvic acid) is an active-site residue. Ser-183 is modified (pyruvic acid (Ser); by autocatalysis).

This sequence belongs to the phosphatidylserine decarboxylase family. PSD-A subfamily. Heterodimer of a large membrane-associated beta subunit and a small pyruvoyl-containing alpha subunit. The cofactor is pyruvate. Post-translationally, is synthesized initially as an inactive proenzyme. Formation of the active enzyme involves a self-maturation process in which the active site pyruvoyl group is generated from an internal serine residue via an autocatalytic post-translational modification. Two non-identical subunits are generated from the proenzyme in this reaction, and the pyruvate is formed at the N-terminus of the alpha chain, which is derived from the carboxyl end of the proenzyme. The post-translation cleavage follows an unusual pathway, termed non-hydrolytic serinolysis, in which the side chain hydroxyl group of the serine supplies its oxygen atom to form the C-terminus of the beta chain, while the remainder of the serine residue undergoes an oxidative deamination to produce ammonia and the pyruvoyl prosthetic group on the alpha chain.

The protein localises to the cell membrane. It catalyses the reaction a 1,2-diacyl-sn-glycero-3-phospho-L-serine + H(+) = a 1,2-diacyl-sn-glycero-3-phosphoethanolamine + CO2. It participates in phospholipid metabolism; phosphatidylethanolamine biosynthesis; phosphatidylethanolamine from CDP-diacylglycerol: step 2/2. Functionally, catalyzes the formation of phosphatidylethanolamine (PtdEtn) from phosphatidylserine (PtdSer). The sequence is that of Phosphatidylserine decarboxylase proenzyme from Syntrophus aciditrophicus (strain SB).